We begin with the raw amino-acid sequence, 76 residues long: Acyl carrier protein (76 aa).

One can recognise a Carrier domain in the interval 1 to 76 (MSIEERVKKI…SAIDYVQNNQ (76 aa)). S36 bears the O-(pantetheine 4'-phosphoryl)serine mark.

This sequence belongs to the acyl carrier protein (ACP) family. Post-translationally, 4'-phosphopantetheine is transferred from CoA to a specific serine of apo-ACP by AcpS. This modification is essential for activity because fatty acids are bound in thioester linkage to the sulfhydryl of the prosthetic group.

Its subcellular location is the cytoplasm. Its pathway is lipid metabolism; fatty acid biosynthesis. Functionally, carrier of the growing fatty acid chain in fatty acid biosynthesis. In Mannheimia succiniciproducens (strain KCTC 0769BP / MBEL55E), this protein is Acyl carrier protein.